Reading from the N-terminus, the 352-residue chain is Maleylacetate reductase (352 aa).

Residues 93 to 94 (GS) and 115 to 119 (TTYAG) each bind NAD(+).

Belongs to the iron-containing alcohol dehydrogenase family. Requires The maleylacetate reductase family of enzymes does not require any metal ion for activity, despite being related to the family III metal-dependent polyol dehydrogenases. as cofactor.

The enzyme catalyses 3-oxoadipate + NAD(+) = maleylacetate + NADH + H(+). The protein operates within xenobiotic degradation; gamma-hexachlorocyclohexane degradation. Its function is as follows. Catalyzes the NADH-dependent reduction of maleylacetate to beta-ketoadipate, a step in the degradation of gamma-hexachlorocyclohexane (gamma-HCH or lindane). Has an essential role in this assimilation pathway that allows S.japonicum UT26 to grow on gamma-HCH as the sole source of carbon and energy. The polypeptide is Maleylacetate reductase (Sphingobium indicum (strain DSM 16413 / CCM 7287 / MTCC 6362 / UT26 / NBRC 101211 / UT26S) (Sphingobium japonicum)).